A 360-amino-acid chain; its full sequence is Archaemetzincin-2 (360 aa).

Zn(2+) is bound at residue histidine 254. Catalysis depends on glutamate 255, which acts as the Proton acceptor. Histidine 258, histidine 264, cysteine 265, cysteine 270, cysteine 289, and cysteine 292 together coordinate Zn(2+).

Belongs to the peptidase M54 family. The cofactor is Zn(2+).

Functionally, probable zinc metalloprotease. This Pongo abelii (Sumatran orangutan) protein is Archaemetzincin-2 (AMZ2).